The sequence spans 353 residues: DNA integrity scanning protein DisA (353 aa).

The DAC domain maps to 6-144; it reads DKELMNILKI…GGIKYVLRDS (139 aa). ATP-binding positions include glycine 73, leucine 91, and 104–108; that span reads TRHRT.

The protein belongs to the DisA family. Homooctamer. Requires Mg(2+) as cofactor.

It catalyses the reaction 2 ATP = 3',3'-c-di-AMP + 2 diphosphate. Participates in a DNA-damage check-point that is active prior to asymmetric division when DNA is damaged. DisA forms globular foci that rapidly scan along the chromosomes during sporulation, searching for lesions. When a lesion is present, DisA pauses at the lesion site. This triggers a cellular response that culminates in a temporary block in sporulation initiation. In terms of biological role, also has diadenylate cyclase activity, catalyzing the condensation of 2 ATP molecules into cyclic di-AMP (c-di-AMP). c-di-AMP acts as a signaling molecule that couples DNA integrity with progression of sporulation. The rise in c-di-AMP level generated by DisA while scanning the chromosome, operates as a positive signal that advances sporulation; upon encountering a lesion, the DisA focus arrests at the damaged site and halts c-di-AMP synthesis. The sequence is that of DNA integrity scanning protein DisA from Clostridium botulinum (strain Kyoto / Type A2).